The primary structure comprises 128 residues: Phosphoribosyl-AMP cyclohydrolase (128 aa).

Aspartate 79 serves as a coordination point for Mg(2+). Position 80 (cysteine 80) interacts with Zn(2+). Mg(2+) contacts are provided by aspartate 81 and aspartate 83. Residues cysteine 97 and cysteine 104 each coordinate Zn(2+).

The protein belongs to the PRA-CH family. Homodimer. Requires Mg(2+) as cofactor. It depends on Zn(2+) as a cofactor.

It localises to the cytoplasm. The catalysed reaction is 1-(5-phospho-beta-D-ribosyl)-5'-AMP + H2O = 1-(5-phospho-beta-D-ribosyl)-5-[(5-phospho-beta-D-ribosylamino)methylideneamino]imidazole-4-carboxamide. The protein operates within amino-acid biosynthesis; L-histidine biosynthesis; L-histidine from 5-phospho-alpha-D-ribose 1-diphosphate: step 3/9. Functionally, catalyzes the hydrolysis of the adenine ring of phosphoribosyl-AMP. The polypeptide is Phosphoribosyl-AMP cyclohydrolase (Saccharophagus degradans (strain 2-40 / ATCC 43961 / DSM 17024)).